The primary structure comprises 225 residues: NAD(P)H-quinone oxidoreductase subunit K, chloroplastic (225 aa).

Residues Cys43, Cys44, Cys108, and Cys139 each contribute to the [4Fe-4S] cluster site.

Belongs to the complex I 20 kDa subunit family. NDH is composed of at least 16 different subunits, 5 of which are encoded in the nucleus. Requires [4Fe-4S] cluster as cofactor.

Its subcellular location is the plastid. It localises to the chloroplast thylakoid membrane. It catalyses the reaction a plastoquinone + NADH + (n+1) H(+)(in) = a plastoquinol + NAD(+) + n H(+)(out). The enzyme catalyses a plastoquinone + NADPH + (n+1) H(+)(in) = a plastoquinol + NADP(+) + n H(+)(out). NDH shuttles electrons from NAD(P)H:plastoquinone, via FMN and iron-sulfur (Fe-S) centers, to quinones in the photosynthetic chain and possibly in a chloroplast respiratory chain. The immediate electron acceptor for the enzyme in this species is believed to be plastoquinone. Couples the redox reaction to proton translocation, and thus conserves the redox energy in a proton gradient. This is NAD(P)H-quinone oxidoreductase subunit K, chloroplastic from Barbarea verna (Land cress).